A 501-amino-acid chain; its full sequence is Isoflavone 3'-hydroxylase (501 aa).

The chain crosses the membrane as a helical span at residues 7–24; the sequence is LLSLSFIITIKILLKITS. Cys-439 is a binding site for heme.

The protein belongs to the cytochrome P450 family. Requires heme as cofactor. As to expression, expressed constitutively in leaves and stems, but not in roots.

It is found in the endoplasmic reticulum membrane. The enzyme catalyses formononetin + reduced [NADPH--hemoprotein reductase] + O2 = calycosin + oxidized [NADPH--hemoprotein reductase] + H2O + H(+). Its function is as follows. Involved in the biosynthesis of the pterocarpin phytoalexins. Acts on isoflavones with a 4'-methoxy group on the B-ring, such as biochanin A, formononetin and 2'-hydroxyformononetin. Has a low activity with daidzein and pseudobaptigenin, and no activity with the 7-O-methylated isoflavonoids isoformononetin and prunetin. The chain is Isoflavone 3'-hydroxylase from Medicago truncatula (Barrel medic).